Consider the following 98-residue polypeptide: Large ribosomal subunit protein uL23 (98 aa).

The protein belongs to the universal ribosomal protein uL23 family. Part of the 50S ribosomal subunit. Contacts protein L29, and trigger factor when it is bound to the ribosome.

One of the early assembly proteins it binds 23S rRNA. One of the proteins that surrounds the polypeptide exit tunnel on the outside of the ribosome. Forms the main docking site for trigger factor binding to the ribosome. This is Large ribosomal subunit protein uL23 from Lactobacillus gasseri (strain ATCC 33323 / DSM 20243 / BCRC 14619 / CIP 102991 / JCM 1131 / KCTC 3163 / NCIMB 11718 / NCTC 13722 / AM63).